We begin with the raw amino-acid sequence, 159 residues long: Cytochrome c-type biogenesis CcmH-like mitochondrial protein (159 aa).

Topologically, residues 1 to 82 (MEKTDEERKK…ETVLYAPKFD (82 aa)) are mitochondrial intermembrane. Positions 27 and 30 each coordinate heme. The chain crosses the membrane as a helical span at residues 83 to 105 (LQTAALWLTPVIIAGGTAAGIVY). The Mitochondrial matrix segment spans residues 106 to 159 (QKHRLRKNVDIMALNLIRGVPLTPKERVTILDVLIPPSPPPQGVVSRLRRWLNR).

Belongs to the CcmH/CycL/Ccl2/NrfF family. In terms of assembly, interacts (via N-terminus) with CYTC-1. Interacts with CCMFN1 and CCMFN2.

It is found in the mitochondrion inner membrane. Its function is as follows. Plays a central role in mitochondrial cytochrome c maturation. Probable component of a heme lyase complex involved in the reduction of apocytochrome c. Forms a complex with CCMF proteins (CCMFC, CCMFN1 and CCMFN2) that performs the assembly of heme with c-type apocytochromes in mitochondria. This Arabidopsis thaliana (Mouse-ear cress) protein is Cytochrome c-type biogenesis CcmH-like mitochondrial protein.